The chain runs to 89 residues: Pyrin domain-containing protein 1 (89 aa).

The region spanning 1-89 (MGTKREAILK…EEAARLQRAA (89 aa)) is the Pyrin domain.

Interacts with PYCARD/ASC (via pyrin domain). In terms of processing, phosphorylated. In terms of tissue distribution, predominantly expressed in monocytes, macrophages and granulocytes.

It localises to the cytoplasm. Its function is as follows. Associates with PYCARD/ASC and modulates its ability to collaborate with MEFV/pyrin and NLRP3/cryopyrin in NF-kappa-B and pro-caspase-1 activation. Suppresses kinase activity of NF-kappa-B inhibitor kinase (IKK) complex, expression of NF-kappa-B inducible genes and inhibits NF-kappa-B activation by cytokines and LPS. The protein is Pyrin domain-containing protein 1 of Homo sapiens (Human).